Here is a 183-residue protein sequence, read N- to C-terminus: Glutathione-regulated potassium-efflux system ancillary protein KefG (183 aa).

Belongs to the NAD(P)H dehydrogenase (quinone) family. KefG subfamily. In terms of assembly, interacts with KefB.

It localises to the cell inner membrane. It catalyses the reaction a quinone + NADH + H(+) = a quinol + NAD(+). The catalysed reaction is a quinone + NADPH + H(+) = a quinol + NADP(+). Functionally, regulatory subunit of a potassium efflux system that confers protection against electrophiles. Required for full activity of KefB. The polypeptide is Glutathione-regulated potassium-efflux system ancillary protein KefG (Serratia proteamaculans (strain 568)).